The primary structure comprises 118 residues: Succinate dehydrogenase assembly factor 1, mitochondrial (118 aa).

An LYR motif 1; required for interaction with HSC20 motif is present at residues 14–16 (LYR). The LYR motif 2; not required for interaction with HSC20 signature appears at 53–55 (LYR). The interval 53 to 65 (LYRRGRRQLQLLR) is interaction with SDHB. The tract at residues 68–118 (HATAMGTFVRPRGPAEEPGDATAPGTRLDDGGAPKNSCEDTGARETRSDGR) is disordered. A compositionally biased stretch (basic and acidic residues) spans 94–118 (RLDDGGAPKNSCEDTGARETRSDGR).

It belongs to the complex I LYR family. SDHAF1 subfamily. As to quaternary structure, interacts with SDHB within an SDHA-SDHB subcomplex. Also interacts with the iron-sulfur transfer complex formed by HSC20, HSPA9 and ISCU through direct binding to HSC20. Binding of SDHAF1 to SDHB precedes and is necessary for recruitment of the iron-sulfur transfer complex by SDHAF1.

Its subcellular location is the mitochondrion matrix. Plays an essential role in the assembly of succinate dehydrogenase (SDH), an enzyme complex (also referred to as respiratory complex II) that is a component of both the tricarboxylic acid (TCA) cycle and the mitochondrial electron transport chain, and which couples the oxidation of succinate to fumarate with the reduction of ubiquinone (coenzyme Q) to ubiquinol. Promotes maturation of the iron-sulfur protein subunit Sdhb of the SDH catalytic dimer, protecting it from the deleterious effects of oxidants. May act together with SDHAF3. Contributes to iron-sulfur cluster incorporation into SDHB by binding to SDHB and recruiting the iron-sulfur transfer complex formed by HSC20, HSPA9 and ISCU through direct binding to HSC20. This Mus musculus (Mouse) protein is Succinate dehydrogenase assembly factor 1, mitochondrial.